We begin with the raw amino-acid sequence, 396 residues long: Putative glycosyltransferase HOC1 (396 aa).

Topologically, residues 2–13 (AKTTKRASSFRR) are cytoplasmic. Residues 14–34 (LMIFAIIALISLAFGVRYLFH) form a helical; Signal-anchor for type II membrane protein membrane-spanning segment. Topologically, residues 35 to 396 (NSNATDLQKI…WKNTPKVEQK (362 aa)) are lumenal. An N-linked (GlcNAc...) asparagine glycan is attached at Asn37.

It belongs to the glycosyltransferase 32 family. Component of the M-Pol II complex composed of ANP1, MNN9, MNN10, MNN11 and HOC1.

It is found in the golgi apparatus. Its subcellular location is the cis-Golgi network membrane. Functionally, the M-Pol II complex possesses alpha-1,6-mannosyltransferase activity and is probably involved in the elongation of the mannan backbone of N-linked glycans on cell wall and periplasmic proteins. The protein is Putative glycosyltransferase HOC1 (HOC1) of Saccharomyces cerevisiae (strain ATCC 204508 / S288c) (Baker's yeast).